We begin with the raw amino-acid sequence, 72 residues long: NAD(P)H-quinone oxidoreductase subunit O (72 aa).

Belongs to the complex I NdhO subunit family. As to quaternary structure, NDH-1 can be composed of about 15 different subunits; different subcomplexes with different compositions have been identified which probably have different functions.

Its subcellular location is the cellular thylakoid membrane. The enzyme catalyses a plastoquinone + NADH + (n+1) H(+)(in) = a plastoquinol + NAD(+) + n H(+)(out). It catalyses the reaction a plastoquinone + NADPH + (n+1) H(+)(in) = a plastoquinol + NADP(+) + n H(+)(out). Functionally, NDH-1 shuttles electrons from an unknown electron donor, via FMN and iron-sulfur (Fe-S) centers, to quinones in the respiratory and/or the photosynthetic chain. The immediate electron acceptor for the enzyme in this species is believed to be plastoquinone. Couples the redox reaction to proton translocation, and thus conserves the redox energy in a proton gradient. Cyanobacterial NDH-1 also plays a role in inorganic carbon-concentration. The chain is NAD(P)H-quinone oxidoreductase subunit O from Gloeothece citriformis (strain PCC 7424) (Cyanothece sp. (strain PCC 7424)).